A 468-amino-acid polypeptide reads, in one-letter code: Tapasin-related protein (468 aa).

The signal sequence occupies residues 1–18 (MGTQEGWCLLLCLALSGA). The Lumenal segment spans residues 19–405 (AETKPHPAER…STQVVPPERR (387 aa)). The Ig-like V-type domain maps to 181 to 297 (PQGTVRTAVE…SLYRAQQIIQ (117 aa)). 2 disulfides stabilise this stretch: Cys212–Cys283 and Cys321–Cys382. N-linked (GlcNAc...) asparagine glycosylation occurs at Asn265. The Ig-like C1-type domain maps to 304 to 394 (PKVRLSLANE…MHISLEEPLG (91 aa)). A helical membrane pass occupies residues 406–426 (TALGVIFASSLFLLALLFLGL). The Cytoplasmic portion of the chain corresponds to 427-468 (QRRQAPTRVGLLQAERWKTTSCADTQSSHLHEDRTACVSQPS).

In terms of assembly, interacts with peptide-free HLA-A*02-B2M complexes or those loaded with low affinity peptides, likely facilitating peptide exchange onto higher affinity peptides. Interacts with MR1 in a ligand-independent way; this interaction may stabilize MR1 pool and facilitate ligand loading and dissociation.

It is found in the cell membrane. The protein localises to the endoplasmic reticulum membrane. The protein resides in the microsome membrane. Its subcellular location is the golgi apparatus membrane. Its function is as follows. Component of the antigen processing and presentation pathway, which binds to MHC class I coupled with beta2-microglobulin/B2M. Association between TAPBPR and MHC class I occurs in the absence of a functional peptide-loading complex (PLC). Expression seems to slow down and down-regulate MHC class I surface expression. The polypeptide is Tapasin-related protein (TAPBPL) (Pongo abelii (Sumatran orangutan)).